Consider the following 518-residue polypeptide: Ribonuclease Y (518 aa).

Residues 2-22 (GSIIISALLALVIGAVVGFFV) traverse the membrane as a helical segment. The KH domain maps to 208–271 (TVSVVNLPND…ETARIALDKL (64 aa)). In terms of domain architecture, HD spans 334–427 (VLKHSVEVAF…VAAADALSAA (94 aa)).

It belongs to the RNase Y family.

The protein localises to the cell membrane. Functionally, endoribonuclease that initiates mRNA decay. The protein is Ribonuclease Y of Geobacillus thermodenitrificans (strain NG80-2).